The primary structure comprises 377 residues: Queuine tRNA-ribosyltransferase (377 aa).

D89 serves as the catalytic Proton acceptor. Residues 89-93, D143, Q187, and G214 contribute to the substrate site; that span reads DSGGF. Positions 245–251 are RNA binding; it reads GVGKPED. The active-site Nucleophile is the D264. Residues 269–273 are RNA binding; important for wobble base 34 recognition; it reads TRNAR. Zn(2+) contacts are provided by C302, C304, C307, and H333.

This sequence belongs to the queuine tRNA-ribosyltransferase family. As to quaternary structure, homodimer. Within each dimer, one monomer is responsible for RNA recognition and catalysis, while the other monomer binds to the replacement base PreQ1. Zn(2+) is required as a cofactor.

The enzyme catalyses 7-aminomethyl-7-carbaguanine + guanosine(34) in tRNA = 7-aminomethyl-7-carbaguanosine(34) in tRNA + guanine. It functions in the pathway tRNA modification; tRNA-queuosine biosynthesis. In terms of biological role, catalyzes the base-exchange of a guanine (G) residue with the queuine precursor 7-aminomethyl-7-deazaguanine (PreQ1) at position 34 (anticodon wobble position) in tRNAs with GU(N) anticodons (tRNA-Asp, -Asn, -His and -Tyr). Catalysis occurs through a double-displacement mechanism. The nucleophile active site attacks the C1' of nucleotide 34 to detach the guanine base from the RNA, forming a covalent enzyme-RNA intermediate. The proton acceptor active site deprotonates the incoming PreQ1, allowing a nucleophilic attack on the C1' of the ribose to form the product. After dissociation, two additional enzymatic reactions on the tRNA convert PreQ1 to queuine (Q), resulting in the hypermodified nucleoside queuosine (7-(((4,5-cis-dihydroxy-2-cyclopenten-1-yl)amino)methyl)-7-deazaguanosine). In Shewanella sediminis (strain HAW-EB3), this protein is Queuine tRNA-ribosyltransferase.